A 217-amino-acid chain; its full sequence is Probable nicotinate-nucleotide adenylyltransferase (217 aa).

It belongs to the NadD family.

It carries out the reaction nicotinate beta-D-ribonucleotide + ATP + H(+) = deamido-NAD(+) + diphosphate. Its pathway is cofactor biosynthesis; NAD(+) biosynthesis; deamido-NAD(+) from nicotinate D-ribonucleotide: step 1/1. Its function is as follows. Catalyzes the reversible adenylation of nicotinate mononucleotide (NaMN) to nicotinic acid adenine dinucleotide (NaAD). This is Probable nicotinate-nucleotide adenylyltransferase from Moorella thermoacetica (strain ATCC 39073 / JCM 9320).